The following is a 50-amino-acid chain: Small ribosomal subunit protein uS14 (50 aa).

Zn(2+) is bound by residues Cys-15, Cys-18, Cys-33, and Cys-36.

This sequence belongs to the universal ribosomal protein uS14 family. Zinc-binding uS14 subfamily. In terms of assembly, part of the 30S ribosomal subunit. The cofactor is Zn(2+).

In terms of biological role, binds 16S rRNA, required for the assembly of 30S particles. The sequence is that of Small ribosomal subunit protein uS14 from Methanosarcina mazei (strain ATCC BAA-159 / DSM 3647 / Goe1 / Go1 / JCM 11833 / OCM 88) (Methanosarcina frisia).